The chain runs to 264 residues: Acyl-[acyl-carrier-protein]--UDP-N-acetylglucosamine O-acyltransferase (264 aa).

The protein belongs to the transferase hexapeptide repeat family. LpxA subfamily. In terms of assembly, homotrimer.

It localises to the cytoplasm. It carries out the reaction a (3R)-hydroxyacyl-[ACP] + UDP-N-acetyl-alpha-D-glucosamine = a UDP-3-O-[(3R)-3-hydroxyacyl]-N-acetyl-alpha-D-glucosamine + holo-[ACP]. The protein operates within glycolipid biosynthesis; lipid IV(A) biosynthesis; lipid IV(A) from (3R)-3-hydroxytetradecanoyl-[acyl-carrier-protein] and UDP-N-acetyl-alpha-D-glucosamine: step 1/6. Involved in the biosynthesis of lipid A, a phosphorylated glycolipid that anchors the lipopolysaccharide to the outer membrane of the cell. This is Acyl-[acyl-carrier-protein]--UDP-N-acetylglucosamine O-acyltransferase from Chlorobaculum parvum (strain DSM 263 / NCIMB 8327) (Chlorobium vibrioforme subsp. thiosulfatophilum).